A 295-amino-acid polypeptide reads, in one-letter code: Nucleotide-binding protein llmg_1557 (295 aa).

Gly12–Thr19 is a binding site for ATP. Position 63–66 (Asp63–Ser66) interacts with GTP.

It belongs to the RapZ-like family.

Its function is as follows. Displays ATPase and GTPase activities. The protein is Nucleotide-binding protein llmg_1557 of Lactococcus lactis subsp. cremoris (strain MG1363).